A 475-amino-acid chain; its full sequence is Gamma-aminobutyric acid receptor subunit gamma-2 (475 aa).

An N-terminal signal peptide occupies residues M1–R39. Residues K41–F275 lie on the Extracellular side of the membrane. N-linked (GlcNAc...) asparagine glycosylation is found at N52 and N129. Residues C190 and C204 are joined by a disulfide bond. The N-linked (GlcNAc...) asparagine glycan is linked to N247. The chain crosses the membrane as a helical span at residues T276–I296. The Cytoplasmic segment spans residues N297–P302. The helical transmembrane segment at A303–A322 threads the bilayer. Over R323 to A334 the chain is Extracellular. The chain crosses the membrane as a helical span at residues M335–F359. Over V360–S451 the chain is Cytoplasmic. S382 is subject to Phosphoserine; by PKC. The chain crosses the membrane as a helical span at residues Y452–Y472. Residues L473 to L475 lie on the Extracellular side of the membrane.

It belongs to the ligand-gated ion channel (TC 1.A.9) family. Gamma-aminobutyric acid receptor (TC 1.A.9.5) subfamily. GABRG2 sub-subfamily. In terms of assembly, heteropentamer, formed by a combination of alpha (GABRA1-6), beta (GABRB1-3), gamma (GABRG1-3), delta (GABRD), epsilon (GABRE), rho (GABRR1-3), pi (GABRP) and theta (GABRQ) chains, each subunit exhibiting distinct physiological and pharmacological properties. Interacts with GABARAP. Interacts with KIF21B. Identified in a complex of 720 kDa composed of LHFPL4, NLGN2, GABRA1, GABRB2, GABRG2 and GABRB3. Interacts with LHFPL4. Interacts with SHISA7; interaction leads to the regulation of GABA(A) receptor trafficking, channel deactivation kinetics and pharmacology. Palmitoylated by ZDHHC3/GODZ; required for the accumulation of GABA(A) receptors at the postsynaptic membrane of inhibitory GABAergic synapses. Post-translationally, glycosylated.

It localises to the postsynaptic cell membrane. The protein resides in the cell membrane. The protein localises to the cell projection. Its subcellular location is the dendrite. It is found in the cytoplasmic vesicle membrane. The enzyme catalyses chloride(in) = chloride(out). Allosterically activated by benzodiazepines. Activated by pentobarbital. Inhibited by the antagonist bicuculline. Inhibited by zinc ions. Potentiated by histamine. Functionally, gamma subunit of the heteropentameric ligand-gated chloride channel gated by gamma-aminobutyric acid (GABA), a major inhibitory neurotransmitter in the brain. GABA-gated chloride channels, also named GABA(A) receptors (GABAAR), consist of five subunits arranged around a central pore and contain GABA active binding site(s) located at the alpha and beta subunit interface(s). When activated by GABA, GABAARs selectively allow the flow of chloride anions across the cell membrane down their electrochemical gradient. Gamma-2/GABRG2-containing GABAARs are found at both synaptic and extrasynaptic sites. Chloride influx into the postsynaptic neuron following GABAAR opening decreases the neuron ability to generate a new action potential, thereby reducing nerve transmission. GABAARs containing alpha-1 and beta-2 or -3 subunits exhibit synaptogenic activity; the gamma-2 subunit being necessary but not sufficient to induce rapid synaptic contacts formation. Extrasynaptic gamma-2-containing receptors contribute to the tonic GABAergic inhibition. GABAARs function also as histamine receptor where histamine binds at the interface of two neighboring beta subunits and potentiates GABA response in a gamma-2 subunit-controlled manner. The sequence is that of Gamma-aminobutyric acid receptor subunit gamma-2 (GABRG2) from Bos taurus (Bovine).